Here is a 187-residue protein sequence, read N- to C-terminus: Potassium-transporting ATPase KdpC subunit (187 aa).

The chain crosses the membrane as a helical span at residues 10–30 (LVAATMLICVAGYSAAVWAVG).

The protein belongs to the KdpC family. As to quaternary structure, the system is composed of three essential subunits: KdpA, KdpB and KdpC.

It localises to the cell inner membrane. In terms of biological role, part of the high-affinity ATP-driven potassium transport (or Kdp) system, which catalyzes the hydrolysis of ATP coupled with the electrogenic transport of potassium into the cytoplasm. This subunit acts as a catalytic chaperone that increases the ATP-binding affinity of the ATP-hydrolyzing subunit KdpB by the formation of a transient KdpB/KdpC/ATP ternary complex. This is Potassium-transporting ATPase KdpC subunit from Parvibaculum lavamentivorans (strain DS-1 / DSM 13023 / NCIMB 13966).